A 372-amino-acid polypeptide reads, in one-letter code: MALWRCSSSWLSSVSRSSGGVGGGESKVSPEIAPVSGGEGEGEEEEGEEERWSRLLPELLTEIMRRVDAGAERWPPRRDVVACACVCRRWRDAAVSVVRPPLECGRITFPSSLKQPGPRDAPMHCFIRRNKKNSTFYLYLSLTQALTDKGKFLLAARRFRNGAHTEYIISYDCDDLFPGSNSYVGKLRSDFLGTKFIIYDSQPPYDGAKPSRSQSSRRFASKQINPNVSGGNYEVGQVSYKFNFLKSRGPRRMQCNIQCPVGQSTASDPLKKLISTSSPLALRNKAPRWHEHLQCWCLNFHGRVTVASVKNFQLVAPAGTSDPWGIADEETVILQFGKIEDDAFTMDYRQPLSAFQAFAICLTSFGTKLACE.

The interval 1–51 (MALWRCSSSWLSSVSRSSGGVGGGESKVSPEIAPVSGGEGEGEEEEGEEER) is disordered. The span at 7-18 (SSSWLSSVSRSS) shows a compositional bias: low complexity. Residues 40 to 49 (GEGEEEEGEE) are compositionally biased toward acidic residues. The F-box domain maps to 50–105 (ERWSRLLPELLTEIMRRVDAGAERWPPRRDVVACACVCRRWRDAAVSVVRPPLECG).

This sequence belongs to the TUB family. As to expression, ubiquitous.

The chain is Tubby-like F-box protein 9 (TULP9) from Oryza sativa subsp. japonica (Rice).